A 256-amino-acid polypeptide reads, in one-letter code: Trypsin epsilon (256 aa).

An N-terminal signal peptide occupies residues 1-22 (MLKIAVLLSVLACALAGTIPDG). A propeptide spans 23–30 (LLPQLDGR) (activation peptide). The region spanning 31-254 (IVGGYETSID…FHEWIERTAR (224 aa)) is the Peptidase S1 domain. Cysteine 56 and cysteine 72 are disulfide-bonded. Active-site charge relay system residues include histidine 71 and aspartate 116. Cystine bridges form between cysteine 180–cysteine 197 and cysteine 206–cysteine 230. Serine 210 serves as the catalytic Charge relay system.

This sequence belongs to the peptidase S1 family.

Its subcellular location is the secreted. It localises to the extracellular space. The enzyme catalyses Preferential cleavage: Arg-|-Xaa, Lys-|-Xaa.. The chain is Trypsin epsilon (epsilonTry) from Drosophila erecta (Fruit fly).